We begin with the raw amino-acid sequence, 249 residues long: uncharacterized protein (249 aa).

11 to 34 lines the NADP(+) pocket; sequence IFGGRSQIGGELARRLAAGATMVL. S142 provides a ligand contact to substrate. Residue Y155 is the Proton acceptor of the active site.

The protein belongs to the short-chain dehydrogenases/reductases (SDR) family.

This is an uncharacterized protein from Mycobacterium tuberculosis (strain CDC 1551 / Oshkosh).